A 102-amino-acid chain; its full sequence is Large ribosomal subunit protein uL24 (102 aa).

Residues 44-65 (HAKPSQDNPQGGILNQEAPIHS) form a disordered region.

The protein belongs to the universal ribosomal protein uL24 family. Part of the 50S ribosomal subunit.

Functionally, one of two assembly initiator proteins, it binds directly to the 5'-end of the 23S rRNA, where it nucleates assembly of the 50S subunit. Its function is as follows. One of the proteins that surrounds the polypeptide exit tunnel on the outside of the subunit. This chain is Large ribosomal subunit protein uL24, found in Shouchella clausii (strain KSM-K16) (Alkalihalobacillus clausii).